We begin with the raw amino-acid sequence, 161 residues long: Nucleotide-binding protein azo2183 (161 aa).

Belongs to the YajQ family.

In terms of biological role, nucleotide-binding protein. The protein is Nucleotide-binding protein azo2183 of Azoarcus sp. (strain BH72).